Here is a 131-residue protein sequence, read N- to C-terminus: 1,4-dihydroxy-2-naphthoyl-CoA hydrolase (131 aa).

The active site involves aspartate 7.

Belongs to the 4-hydroxybenzoyl-CoA thioesterase family. DHNA-CoA hydrolase subfamily.

The catalysed reaction is 1,4-dihydroxy-2-naphthoyl-CoA + H2O = 1,4-dihydroxy-2-naphthoate + CoA + H(+). It functions in the pathway cofactor biosynthesis; phylloquinone biosynthesis. It participates in quinol/quinone metabolism; 1,4-dihydroxy-2-naphthoate biosynthesis; 1,4-dihydroxy-2-naphthoate from chorismate: step 7/7. Functionally, catalyzes the hydrolysis of 1,4-dihydroxy-2-naphthoyl-CoA (DHNA-CoA) to 1,4-dihydroxy-2-naphthoate (DHNA), a reaction involved in phylloquinone (vitamin K1) biosynthesis. The polypeptide is 1,4-dihydroxy-2-naphthoyl-CoA hydrolase (Synechococcus sp. (strain RCC307)).